The primary structure comprises 464 residues: Glycine--tRNA ligase (464 aa).

2 residues coordinate substrate: arginine 104 and glutamate 175. ATP is bound by residues 207–209, 217–222, 292–293, and 336–339; these read RNE, FRTREF, EL, and GVNR. Position 222–226 (222–226) interacts with substrate; sequence FEQME. 332–336 serves as a coordination point for substrate; that stretch reads EPALG.

This sequence belongs to the class-II aminoacyl-tRNA synthetase family. Homodimer.

Its subcellular location is the cytoplasm. It carries out the reaction tRNA(Gly) + glycine + ATP = glycyl-tRNA(Gly) + AMP + diphosphate. In terms of biological role, catalyzes the attachment of glycine to tRNA(Gly). In Leptospira interrogans serogroup Icterohaemorrhagiae serovar Lai (strain 56601), this protein is Glycine--tRNA ligase.